Here is a 93-residue protein sequence, read N- to C-terminus: MDGIKYAVFTDKSIRLLGKNQYTFNVESGSTRTEIKHWVELFFGVKVIAMNSHRLPGKVKRMGPILGHTMHYRRMIITLQPGYSIPPLRKKRT.

The protein belongs to the universal ribosomal protein uL23 family. In terms of assembly, part of the 50S ribosomal subunit.

It is found in the plastid. The protein localises to the chloroplast. Functionally, binds to 23S rRNA. This is Large ribosomal subunit protein uL23cz/uL23cy (rpl23-A) from Arabidopsis thaliana (Mouse-ear cress).